The sequence spans 413 residues: Glucose-1-phosphate adenylyltransferase (413 aa).

Alpha-D-glucose 1-phosphate is bound by residues Tyr-102, Gly-167, 182–183, and Ser-200; that span reads EK.

The protein belongs to the bacterial/plant glucose-1-phosphate adenylyltransferase family. Homotetramer.

The enzyme catalyses alpha-D-glucose 1-phosphate + ATP + H(+) = ADP-alpha-D-glucose + diphosphate. It participates in glycan biosynthesis; glycogen biosynthesis. Functionally, involved in the biosynthesis of ADP-glucose, a building block required for the elongation reactions to produce glycogen. Catalyzes the reaction between ATP and alpha-D-glucose 1-phosphate (G1P) to produce pyrophosphate and ADP-Glc. This is Glucose-1-phosphate adenylyltransferase from Deinococcus deserti (strain DSM 17065 / CIP 109153 / LMG 22923 / VCD115).